The chain runs to 594 residues: Spindle pole body-associated protein CIK1 (594 aa).

The segment at 1 to 29 (MNNSKIPKLSFHSDPNNVTRDFPKTKRQK) is disordered. Residues 81–360 (IERVKNNERK…VNELEKVQQE (280 aa)) adopt a coiled-coil conformation.

As to quaternary structure, interacts with KAR3; the interaction is direct.

It localises to the nucleus. Its subcellular location is the cytoplasm. It is found in the cytoskeleton. The protein resides in the microtubule organizing center. The protein localises to the spindle pole body. It localises to the spindle. Together with the minus end-directed microtubule motor KAR3, involved in spindle midzone assembly, karyogamy (nuclear fusion) during mating, and with an essential function in meiosis I. To contribute to spindle midzone assembly during mitotic metaphase, the KAR3-CIK1 motor cross-links anti-parallel microtubules to align them on the spindle axis; as the motor travels polewards splayed microtubules are pulled into alignment. During the karyogamy (nuclear fusion) step of mating, KAR3-CIK1 cross-links antiparallel cytoplasmic microtubules emanating from the spindle pole bodies of mating partners; the motor activity of KAR3 creates the force that pulls the nuclei together by sliding cross-linked microtubules past one another. KAR3-CIK1 promotes microtubule shortening predominantly from the microtubule plus-end. Required for interhomolog recombination, synapsis of homologous chromosomes and establishment of a meiosis I spindle. The sequence is that of Spindle pole body-associated protein CIK1 (CIK1) from Saccharomyces cerevisiae (strain ATCC 204508 / S288c) (Baker's yeast).